We begin with the raw amino-acid sequence, 1342 residues long: DNA-directed RNA polymerase subunit beta (1342 aa).

The protein belongs to the RNA polymerase beta chain family. The RNAP catalytic core consists of 2 alpha, 1 beta, 1 beta' and 1 omega subunit. When a sigma factor is associated with the core the holoenzyme is formed, which can initiate transcription.

It carries out the reaction RNA(n) + a ribonucleoside 5'-triphosphate = RNA(n+1) + diphosphate. In terms of biological role, DNA-dependent RNA polymerase catalyzes the transcription of DNA into RNA using the four ribonucleoside triphosphates as substrates. The sequence is that of DNA-directed RNA polymerase subunit beta from Yersinia pestis bv. Antiqua (strain Angola).